Reading from the N-terminus, the 211-residue chain is Glial cell line-derived neurotrophic factor (211 aa).

Positions 1–19 (MKLWDVVAVCLVLLHTASA) are cleaved as a signal peptide. A propeptide spanning residues 20–75 (FPLPAGKRLLEAPAEDHSLGHRRVPFALTSDSNMPEDYPDQFDDVMDFIQATIKRL) is cleaved from the precursor. The interval 76–113 (KRSPDKQAAALPRRERNRQAAAASPENSRGKGRRGQRG) is disordered. Disulfide bonds link Cys118/Cys179, Cys145/Cys208, and Cys149/Cys210. N-linked (GlcNAc...) asparagine glycosylation is found at Asn126 and Asn162.

This sequence belongs to the TGF-beta family. GDNF subfamily. Homodimer; disulfide-linked. Interacts with GFRA1 coreceptor and RET: forms a 2:2:2 ternary complex composed of GDNF ligand, GFRA1 and RET receptor. Interacts (via propeptide) with SORL1 (via N-terminal ectodomain); this interaction affects GDNF-regulated, but not constitutive secretion. Also interacts with SORL1 in complex with GFRA1; this interaction leads to GDNF endocytosis and lysosomal degradation. In terms of tissue distribution, expressed in both the central nervous system (CNS) and in non-CNS tissues, including the kidney, lung, bone, heart, liver, spleen, sciatic nerve and blood. Expressed in brain (at protein level). Localizes at the proximal ligature of the hypoglossal nerve.

Its subcellular location is the secreted. Its function is as follows. Neurotrophic factor that enhances survival and morphological differentiation of dopaminergic neurons and increases their high-affinity dopamine uptake. Acts by binding to its coreceptor, GFRA1, leading to autophosphorylation and activation of the RET receptor. May also modulate local neuronal effects in distal regions of the motor neuron. Involved in the development of the neural crest. This is Glial cell line-derived neurotrophic factor (Gdnf) from Rattus norvegicus (Rat).